The following is a 446-amino-acid chain: D(1A) dopamine receptor (446 aa).

The Extracellular portion of the chain corresponds to 1 to 23; it reads MRTLNTSTMDGTGLVVERDFSFR. The N-linked (GlcNAc...) asparagine glycan is linked to Asn-5. The helical transmembrane segment at 24-49 threads the bilayer; that stretch reads ILTACFLSLLILSTLLGNTLVCAAVI. Residues 50-60 are Cytoplasmic-facing; the sequence is RFRHLRSKVTN. A helical membrane pass occupies residues 61 to 87; it reads FFVISLAVSDLLVAVLVMPWKAVAEIA. The Extracellular segment spans residues 88 to 96; sequence GFWPFGSFC. An intrachain disulfide couples Cys-96 to Cys-186. The helical transmembrane segment at 97–119 threads the bilayer; that stretch reads NIWVAFDIMCSTASILNLCVISV. Over 120 to 138 the chain is Cytoplasmic; that stretch reads DRYWAISSPFRYERKMTPK. A helical transmembrane segment spans residues 139-163; sequence AAFILISVAWTLSVLISFIPVQLSW. Residues 164-192 lie on the Extracellular side of the membrane; it reads HKAKPTSPSDGNVTSLGKTTHNCDSSLSR. The chain crosses the membrane as a helical span at residues 193–218; sequence TYAISSSLISFYIPVAIMIVTYTRIY. Over 219 to 272 the chain is Cytoplasmic; it reads RIAQKQIRRISALERAAVHAKNCQTTAGNGNPAECSQPESSFKMSFKRETKVLK. The helical transmembrane segment at 273 to 299 threads the bilayer; it reads TLSVIMGVFVCCWLPFFILNCMVPFCG. The Extracellular segment spans residues 300 to 312; sequence SGETKPFCIDSIT. Residues 313–337 form a helical membrane-spanning segment; the sequence is FDVFVWFGWANSSLNPIIYAFNADF. Topologically, residues 338–446 are cytoplasmic; sequence RKAFSTLLGC…PITQNGQHPT (109 aa). Residues Cys-347 and Cys-351 are each lipidated (S-palmitoyl cysteine).

It belongs to the G-protein coupled receptor 1 family. Interacts with DNAJC14 via its C-terminus. Interacts with DRD2. Interacts with DORIP1.

The protein resides in the cell membrane. It is found in the endoplasmic reticulum membrane. Its subcellular location is the cell projection. The protein localises to the cilium membrane. It localises to the dendrite. The protein resides in the dendritic spine. In terms of biological role, dopamine receptor whose activity is mediated by G proteins which activate adenylyl cyclase. This chain is D(1A) dopamine receptor (DRD1), found in Sus scrofa (Pig).